A 251-amino-acid polypeptide reads, in one-letter code: Squamosa promoter-binding-like protein 4 (251 aa).

Residues Met-1 to Pro-15 are compositionally biased toward pro residues. The segment at Met-1–Gly-64 is disordered. Residues Ala-24 to Ala-43 show a composition bias toward low complexity. An SBP-type zinc finger spans residues Glu-65 to Pro-142. The Zn(2+) site is built by Cys-68, Cys-73, Cys-90, His-93, Cys-109, Cys-112, His-116, and Cys-128. Positions Lys-125 to Lys-141 match the Bipartite nuclear localization signal motif.

As to expression, expressed in stems, leaf sheaths, and young panicles.

Its subcellular location is the nucleus. Functionally, trans-acting factor that binds specifically to the consensus nucleotide sequence 5'-TNCGTACAA-3'. May be involved in panicle development. The protein is Squamosa promoter-binding-like protein 4 (SPL4) of Oryza sativa subsp. japonica (Rice).